We begin with the raw amino-acid sequence, 226 residues long: Thiocyanate methyltransferase 1 (226 aa).

Tryptophan 35, tryptophan 39, tryptophan 46, and glycine 73 together coordinate S-adenosyl-L-methionine. Serine 85 carries the post-translational modification Phosphoserine. S-adenosyl-L-methionine contacts are provided by residues aspartate 94, 122-123, and tyrosine 138; that span reads DF.

The protein belongs to the class I-like SAM-binding methyltransferase superfamily. TPMT family. In terms of tissue distribution, ubiquitous.

It catalyses the reaction thiocyanate + S-adenosyl-L-methionine = methyl thiocyanate + S-adenosyl-L-homocysteine. In terms of biological role, S-adenosyl-L-methionine-dependent methyltransferase. Probably involved in glucosinolate metabolism and defense against phytopathogens. Highly reactive to thiocyanate (NCS(-)) derived from myrosinase-mediated hydrolysis of glucosinolates upon tissue damage. Also accepts halid ions as substrates with a lower affinity. The polypeptide is Thiocyanate methyltransferase 1 (TMT1) (Brassica oleracea (Wild cabbage)).